The chain runs to 347 residues: Coproporphyrinogen-III oxidase, aerobic 2 (347 aa).

The tract at residues 1–31 (MGRHSDNSLQESANHTVLLTSPTNTIPKDSR) is disordered. Polar residues predominate over residues 7–31 (NSLQESANHTVLLTSPTNTIPKDSR). The interval 75–84 (VIREGRVFEQ) is important for dimerization. Ser-119 contributes to the substrate binding site. The active-site Proton donor is the His-133. Substrate is bound by residues 135 to 137 (NYR) and 305 to 310 (KGRTES). The interval 287-322 (YVEFNLVYDRGTVFGLQTKGRTESILMSLPPLARWE) is important for dimerization.

Belongs to the aerobic coproporphyrinogen-III oxidase family. Homodimer.

The protein localises to the cytoplasm. The catalysed reaction is coproporphyrinogen III + O2 + 2 H(+) = protoporphyrinogen IX + 2 CO2 + 2 H2O. It functions in the pathway porphyrin-containing compound metabolism; protoporphyrin-IX biosynthesis; protoporphyrinogen-IX from coproporphyrinogen-III (O2 route): step 1/1. In terms of biological role, key enzyme in heme biosynthesis. Catalyzes the oxidative decarboxylation of propionic acid side chains of rings A and B of coproporphyrinogen III. The protein is Coproporphyrinogen-III oxidase, aerobic 2 of Nostoc sp. (strain PCC 7120 / SAG 25.82 / UTEX 2576).